Here is a 160-residue protein sequence, read N- to C-terminus: Deoxyuridine 5'-triphosphate nucleotidohydrolase (160 aa).

Substrate contacts are provided by residues 79 to 81 (RSG), asparagine 92, 96 to 98 (TVD), and lysine 106.

This sequence belongs to the dUTPase family. The cofactor is Mg(2+).

It catalyses the reaction dUTP + H2O = dUMP + diphosphate + H(+). Its pathway is pyrimidine metabolism; dUMP biosynthesis; dUMP from dCTP (dUTP route): step 2/2. Its function is as follows. This enzyme is involved in nucleotide metabolism: it produces dUMP, the immediate precursor of thymidine nucleotides and it decreases the intracellular concentration of dUTP so that uracil cannot be incorporated into DNA. The polypeptide is Deoxyuridine 5'-triphosphate nucleotidohydrolase (Sinorhizobium medicae (strain WSM419) (Ensifer medicae)).